The primary structure comprises 200 residues: Translation machinery-associated protein 22 (200 aa).

An SUI1 domain is found at 95 to 166 (VVIRREARTK…EVEAYIHSLL (72 aa)).

This sequence belongs to the DENR family. Interacts with the 40S ribosomal subunit.

The protein resides in the cytoplasm. In Kluyveromyces lactis (strain ATCC 8585 / CBS 2359 / DSM 70799 / NBRC 1267 / NRRL Y-1140 / WM37) (Yeast), this protein is Translation machinery-associated protein 22 (TMA22).